We begin with the raw amino-acid sequence, 85 residues long: Probable oxaloacetate decarboxylase gamma chain (85 aa).

A helical transmembrane segment spans residues 11–33 (AATLMVTGMAVVFIFLTILVYLV).

It belongs to the OadG family. As to quaternary structure, heterotrimer of an alpha, a beta and a gamma subunit. Na(+) serves as cofactor.

It localises to the cell membrane. It carries out the reaction oxaloacetate + 2 Na(+)(in) + H(+) = pyruvate + 2 Na(+)(out) + CO2. Catalyzes the decarboxylation of oxaloacetate coupled to Na(+) translocation. This is Probable oxaloacetate decarboxylase gamma chain from Vibrio parahaemolyticus serotype O3:K6 (strain RIMD 2210633).